A 273-amino-acid polypeptide reads, in one-letter code: UPF0380 protein YfjQ (273 aa).

This sequence belongs to the UPF0380 family.

The chain is UPF0380 protein YfjQ (yfjQ) from Escherichia coli (strain K12).